Consider the following 360-residue polypeptide: Protein phosphatase 1 regulatory subunit 7 (360 aa).

Positions 1–65 (MAAERGAGQQ…DEDPEEGQEL (65 aa)) are disordered. The residue at position 2 (Ala-2) is an N-acetylalanine. Phosphoserine occurs at positions 12, 24, 27, 44, and 47. Basic and acidic residues predominate over residues 17–34 (EVDRRVESEESGDEEGKK). Positions 53–63 (ERGDEDPEEGQ) are enriched in acidic residues. LRR repeat units follow at residues 77–98 (DAED…EVLK), 99–120 (KVKT…EGLQ), 121–142 (SLRE…DALT), 143–164 (ELEV…DKLT), 165–186 (RLKK…SSLH), 187–208 (QLQM…DTLT), 209–230 (NLES…DALT), 231–252 (NLTV…QSLV), 253–274 (NLRE…DNNN), 275–296 (KLTM…SHLT), and 297–318 (ELQE…DELK). Position 322 is a phosphoserine (Ser-322). Residues 331–360 (NPLQRDPQYRRKIMLALPSVRQIDATFVRF) form the LRRCT domain.

Belongs to the SDS22 family. As to quaternary structure, interacts with PPP1CA, PPP1CB and PPP1CC/PPP1G. Interacts with PPP1CC isoform 2 in motile caudal epididymal spermatozoa. Expressed in epididymal spermatozoa including the principal piece of the flagellum and the head-neck junction.

Its subcellular location is the nucleus. Regulatory subunit of protein phosphatase 1. Inactivates the PPP1CC isoform 2 during epididymal sperm maturation. In Bos taurus (Bovine), this protein is Protein phosphatase 1 regulatory subunit 7 (PPP1R7).